We begin with the raw amino-acid sequence, 479 residues long: Odorant receptor coreceptor (479 aa).

Topologically, residues 1-43 are cytoplasmic; it reads MMKMKQQGLVADLLPNIRVMKFFGHFVFNYYDDNSSKYLHKIF. The chain crosses the membrane as a helical span at residues 44–64; the sequence is CCVNLFLLLLQFALCAVNLII. The Extracellular portion of the chain corresponds to 65–73; sequence ESADVDDLT. A helical membrane pass occupies residues 74–94; sequence ANTITLLFFTHSIVKIIYFAV. Topologically, residues 95-133 are cytoplasmic; sequence RSKYFYRTWAIWNNPNSHPLFAESNARYHAIALKKMRLL. Residues 134–154 traverse the membrane as a helical segment; sequence LFLVGATTVLSAIAWTVLTFF. The Extracellular segment spans residues 155–190; it reads EHPIRKLVDPVTNETTIIELPQLLLRSYYPFDASKG. Asn-167 is a glycosylation site (N-linked (GlcNAc...) asparagine). Residues 191–211 traverse the membrane as a helical segment; it reads IMHVIVLIYQFYWVLFMLIDA. Over 212–350 the chain is Cytoplasmic; sequence NSLDVLFCSW…IVRLVTAVGD (139 aa). The tract at residues 261–280 is disordered; that stretch reads SAEHLRESENQPPPPVPPQG. Residues 351–371 form a helical membrane-spanning segment; the sequence is AYGFALLLHMLTTTITLTLLA. The Extracellular segment spans residues 372-383; the sequence is YQATKVNGVNVY. The chain crosses the membrane as a helical span at residues 384 to 404; sequence AASTIGYIIYTFGQVFLFCIF. The Cytoplasmic segment spans residues 405–455; that stretch reads GNRLIEESTSVMEAAYSCHWYDGSEEAKTFVQIVCQQCQKAMSISGAKFFT. Residues 456–476 form a helical membrane-spanning segment; that stretch reads VSLDLFASVLGAVVTYFMVLV. Residues 477–479 lie on the Extracellular side of the membrane; that stretch reads QLK.

Belongs to the insect chemoreceptor superfamily. Heteromeric odorant receptor channel (TC 1.A.69) family. Orco subfamily. In terms of assembly, heterodimer with conventional odorant receptors (ORs).

The protein localises to the cell membrane. In terms of biological role, odorant coreceptor which complexes with conventional odorant receptors (ORs) to form odorant-sensing units, providing sensitive and prolonged odorant signaling and calcium permeability. Obligate coreceptor of all odorant receptors. Orco is a universal and integral part of the functional odorant receptor, involved in the dendritic localization of other olfactory receptors. Can form functional ion channels in the absence of an odor-binding odorant receptor. Plays a central role in the perception of olfactory stimuli in ants and is essential for ant social organization. Required for pheromone sensing and mating behavior. Also required for the development and maintenance of odorant receptor neurons (ORNs) and of antennal lobe glomeruli. The protein is Odorant receptor coreceptor of Harpegnathos saltator (Jerdon's jumping ant).